The primary structure comprises 239 residues: Ribitol-5-phosphate cytidylyltransferase (239 aa).

CTP-binding positions include 7 to 10 (FAGG) and 80 to 86 (GETGQMS).

It belongs to the IspD/TarI cytidylyltransferase family. TarI subfamily.

The enzyme catalyses D-ribitol 5-phosphate + CTP + H(+) = CDP-L-ribitol + diphosphate. It participates in cell wall biogenesis; poly(ribitol phosphate) teichoic acid biosynthesis. Functionally, catalyzes the transfer of the cytidylyl group of CTP to D-ribitol 5-phosphate. The sequence is that of Ribitol-5-phosphate cytidylyltransferase from Streptococcus agalactiae serotype III (strain NEM316).